Consider the following 199-residue polypeptide: Proteasome subunit beta type-2-B (199 aa).

At Met-1 the chain carries N-acetylmethionine.

Belongs to the peptidase T1B family. In terms of assembly, component of the 20S core complex of the 26S proteasome. The 26S proteasome is composed of a core protease (CP), known as the 20S proteasome, capped at one or both ends by the 19S regulatory particle (RP/PA700). The 20S proteasome core is composed of 28 subunits that are arranged in four stacked rings, resulting in a barrel-shaped structure. The two end rings are each formed by seven alpha subunits, and the two central rings are each formed by seven beta subunits. The catalytic chamber with the active sites is on the inside of the barrel. In terms of tissue distribution, ubiquitous low levels, higher expression in siliques and flowers.

The protein localises to the cytoplasm. Its subcellular location is the nucleus. Its function is as follows. Non-catalytic component of the proteasome, a multicatalytic proteinase complex which is characterized by its ability to cleave peptides with Arg, Phe, Tyr, Leu, and Glu adjacent to the leaving group at neutral or slightly basic pH. The proteasome has an ATP-dependent proteolytic activity. The sequence is that of Proteasome subunit beta type-2-B (PBD2) from Arabidopsis thaliana (Mouse-ear cress).